The chain runs to 91 residues: DNA-binding protein HRL18 (91 aa).

Belongs to the bacterial histone-like protein family.

Functionally, histone-like DNA-binding protein which is capable of wrapping DNA to stabilize it, and thus to prevent its denaturation under extreme environmental conditions. This is DNA-binding protein HRL18 from Rhizobium leguminosarum.